A 197-amino-acid polypeptide reads, in one-letter code: dCTP deaminase, dUMP-forming (197 aa).

DCTP is bound by residues 105 to 110 (RSSMGR), Asp-123, 131 to 133 (TLE), Gln-152, Tyr-166, Lys-174, and Gln-178. Catalysis depends on Glu-133, which acts as the Proton donor/acceptor.

The protein belongs to the dCTP deaminase family. As to quaternary structure, homotrimer.

It catalyses the reaction dCTP + 2 H2O = dUMP + NH4(+) + diphosphate. It participates in pyrimidine metabolism; dUMP biosynthesis; dUMP from dCTP: step 1/1. Bifunctional enzyme that catalyzes both the deamination of dCTP to dUTP and the hydrolysis of dUTP to dUMP without releasing the toxic dUTP intermediate. In Methanosphaera stadtmanae (strain ATCC 43021 / DSM 3091 / JCM 11832 / MCB-3), this protein is dCTP deaminase, dUMP-forming.